Consider the following 226-residue polypeptide: Cytochrome c-553I (226 aa).

The N-terminal stretch at 1–22 (MTSKTTASLLAICVACAASAIA) is a signal peptide. Residues 43–68 (AAVSGDAHEQPAAEAPAEEEEETPAV) form a disordered region. The heme site is built by C125, C128, H129, and M173. The interval 203–226 (RGRPAKREDKSDEFVAQEDSCMSG) is disordered.

Post-translationally, binds 1 heme group per subunit.

The protein resides in the periplasm. This is Cytochrome c-553I (cycB) from Paracoccus denitrificans.